A 148-amino-acid chain; its full sequence is Large ribosomal subunit protein uL22 (148 aa).

Belongs to the universal ribosomal protein uL22 family. In terms of assembly, part of the 50S ribosomal subunit.

Its function is as follows. This protein binds specifically to 23S rRNA. It makes multiple contacts with different domains of the 23S rRNA in the assembled 50S subunit and ribosome. In terms of biological role, the globular domain of the protein is located near the polypeptide exit tunnel on the outside of the subunit, while an extended beta-hairpin is found that lines the wall of the exit tunnel in the center of the 70S ribosome. The sequence is that of Large ribosomal subunit protein uL22 from Thermoplasma volcanium (strain ATCC 51530 / DSM 4299 / JCM 9571 / NBRC 15438 / GSS1).